A 355-amino-acid chain; its full sequence is MSGQGKRLMVMAGGTGGHVFPGLAVAHHLMAQGWQVRWLGTADRMEADLVPKHGIEIDFIRISGLRGKGIKALIAAPLRIFNAWRQARAIMKAYKPDVVLGMGGYVSGPGGLAAWSLGIPVVLHEQNGIAGLTNKWLAKIATKVMQAFPGAFPNAEVVGNPVRIDVLALPLPQQRLAGREGPVRVLVVGGSQGARILNQTMPQVAAKLGDSVTIWHQSGKGSQQSVEQAYAEAGQPQHKVTEFIDDMAAAYAWADVVVCRSGALTVSEIAAAGLPALFVPFQHKDRQQYWNALPLEKAGAAKIIEQPQLSVDAVANTLAGWSRETLLTMAERARAASIPDATERVANEVSRAARA.

UDP-N-acetyl-alpha-D-glucosamine contacts are provided by residues 15–17 (TGG), asparagine 127, arginine 163, serine 191, isoleucine 244, 263–268 (ALTVSE), and glutamine 288.

It belongs to the glycosyltransferase 28 family. MurG subfamily.

The protein localises to the cell inner membrane. It carries out the reaction di-trans,octa-cis-undecaprenyl diphospho-N-acetyl-alpha-D-muramoyl-L-alanyl-D-glutamyl-meso-2,6-diaminopimeloyl-D-alanyl-D-alanine + UDP-N-acetyl-alpha-D-glucosamine = di-trans,octa-cis-undecaprenyl diphospho-[N-acetyl-alpha-D-glucosaminyl-(1-&gt;4)]-N-acetyl-alpha-D-muramoyl-L-alanyl-D-glutamyl-meso-2,6-diaminopimeloyl-D-alanyl-D-alanine + UDP + H(+). It functions in the pathway cell wall biogenesis; peptidoglycan biosynthesis. In terms of biological role, cell wall formation. Catalyzes the transfer of a GlcNAc subunit on undecaprenyl-pyrophosphoryl-MurNAc-pentapeptide (lipid intermediate I) to form undecaprenyl-pyrophosphoryl-MurNAc-(pentapeptide)GlcNAc (lipid intermediate II). This Shigella boydii serotype 18 (strain CDC 3083-94 / BS512) protein is UDP-N-acetylglucosamine--N-acetylmuramyl-(pentapeptide) pyrophosphoryl-undecaprenol N-acetylglucosamine transferase.